The chain runs to 256 residues: Imidazole glycerol phosphate synthase subunit HisF (256 aa).

Residues aspartate 12 and aspartate 131 contribute to the active site.

It belongs to the HisA/HisF family. In terms of assembly, heterodimer of HisH and HisF.

It localises to the cytoplasm. The enzyme catalyses 5-[(5-phospho-1-deoxy-D-ribulos-1-ylimino)methylamino]-1-(5-phospho-beta-D-ribosyl)imidazole-4-carboxamide + L-glutamine = D-erythro-1-(imidazol-4-yl)glycerol 3-phosphate + 5-amino-1-(5-phospho-beta-D-ribosyl)imidazole-4-carboxamide + L-glutamate + H(+). It participates in amino-acid biosynthesis; L-histidine biosynthesis; L-histidine from 5-phospho-alpha-D-ribose 1-diphosphate: step 5/9. IGPS catalyzes the conversion of PRFAR and glutamine to IGP, AICAR and glutamate. The HisF subunit catalyzes the cyclization activity that produces IGP and AICAR from PRFAR using the ammonia provided by the HisH subunit. This is Imidazole glycerol phosphate synthase subunit HisF from Pseudomonas entomophila (strain L48).